The following is a 406-amino-acid chain: Cysteine desulfurase (406 aa).

Lys226 is subject to N6-(pyridoxal phosphate)lysine. The active-site Cysteine persulfide intermediate is the Cys364.

The protein belongs to the class-V pyridoxal-phosphate-dependent aminotransferase family. Csd subfamily. Homodimer. Interacts with SufE and the SufBCD complex composed of SufB, SufC and SufD. The interaction with SufE is required to mediate the direct transfer of the sulfur atom from the S-sulfanylcysteine. It depends on pyridoxal 5'-phosphate as a cofactor.

The protein resides in the cytoplasm. It catalyses the reaction (sulfur carrier)-H + L-cysteine = (sulfur carrier)-SH + L-alanine. It carries out the reaction L-selenocysteine + AH2 = hydrogenselenide + L-alanine + A + H(+). It participates in cofactor biosynthesis; iron-sulfur cluster biosynthesis. Cysteine desulfurases mobilize the sulfur from L-cysteine to yield L-alanine, an essential step in sulfur metabolism for biosynthesis of a variety of sulfur-containing biomolecules. Component of the suf operon, which is activated and required under specific conditions such as oxidative stress and iron limitation. Acts as a potent selenocysteine lyase in vitro, that mobilizes selenium from L-selenocysteine. Selenocysteine lyase activity is however unsure in vivo. In Yersinia pseudotuberculosis serotype O:1b (strain IP 31758), this protein is Cysteine desulfurase.